A 106-amino-acid polypeptide reads, in one-letter code: UPF0213 protein KPN78578_35340 (106 aa).

In terms of domain architecture, GIY-YIG spans 13-88 (VCWFLYLIRT…KQLTKREKER (76 aa)).

It belongs to the UPF0213 family.

This is UPF0213 protein KPN78578_35340 from Klebsiella pneumoniae subsp. pneumoniae (strain ATCC 700721 / MGH 78578).